A 674-amino-acid chain; its full sequence is Methionine--tRNA ligase (674 aa).

Positions 11–21 (PYANGDLHLGH) match the 'HIGH' region motif. 4 residues coordinate Zn(2+): Cys-142, Cys-145, Cys-155, and Cys-158. The 'KMSKS' region signature appears at 330–334 (KMSKS). An ATP-binding site is contributed by Lys-333. The tRNA-binding domain maps to 574 to 674 (DFMKVDLRIA…EGAQPGMRVK (101 aa)).

It belongs to the class-I aminoacyl-tRNA synthetase family. MetG type 1 subfamily. Homodimer. Zn(2+) is required as a cofactor.

Its subcellular location is the cytoplasm. The catalysed reaction is tRNA(Met) + L-methionine + ATP = L-methionyl-tRNA(Met) + AMP + diphosphate. In terms of biological role, is required not only for elongation of protein synthesis but also for the initiation of all mRNA translation through initiator tRNA(fMet) aminoacylation. This chain is Methionine--tRNA ligase, found in Francisella tularensis subsp. holarctica (strain FTNF002-00 / FTA).